Here is a 358-residue protein sequence, read N- to C-terminus: Alanine racemase (358 aa).

The Proton acceptor; specific for D-alanine role is filled by lysine 35. Lysine 35 is subject to N6-(pyridoxal phosphate)lysine. Arginine 130 contributes to the substrate binding site. The active-site Proton acceptor; specific for L-alanine is tyrosine 255. Methionine 303 contacts substrate.

This sequence belongs to the alanine racemase family. The cofactor is pyridoxal 5'-phosphate.

It catalyses the reaction L-alanine = D-alanine. It functions in the pathway amino-acid biosynthesis; D-alanine biosynthesis; D-alanine from L-alanine: step 1/1. Functionally, catalyzes the interconversion of L-alanine and D-alanine. May also act on other amino acids. This is Alanine racemase (alr) from Shewanella baltica (strain OS155 / ATCC BAA-1091).